The primary structure comprises 201 residues: Small ribosomal subunit protein uS4c (201 aa).

Residues methionine 89–proline 157 enclose the S4 RNA-binding domain.

The protein belongs to the universal ribosomal protein uS4 family. Part of the 30S ribosomal subunit. Contacts protein S5. The interaction surface between S4 and S5 is involved in control of translational fidelity.

Its subcellular location is the plastid. It is found in the chloroplast. Its function is as follows. One of the primary rRNA binding proteins, it binds directly to 16S rRNA where it nucleates assembly of the body of the 30S subunit. In terms of biological role, with S5 and S12 plays an important role in translational accuracy. The chain is Small ribosomal subunit protein uS4c (rps4) from Hordeum vulgare (Barley).